Here is a 91-residue protein sequence, read N- to C-terminus: Small ribosomal subunit protein uS15 (91 aa).

It belongs to the universal ribosomal protein uS15 family. As to quaternary structure, part of the 30S ribosomal subunit. Forms a bridge to the 50S subunit in the 70S ribosome, contacting the 23S rRNA.

Functionally, one of the primary rRNA binding proteins, it binds directly to 16S rRNA where it helps nucleate assembly of the platform of the 30S subunit by binding and bridging several RNA helices of the 16S rRNA. In terms of biological role, forms an intersubunit bridge (bridge B4) with the 23S rRNA of the 50S subunit in the ribosome. This Rickettsia peacockii (strain Rustic) protein is Small ribosomal subunit protein uS15.